A 720-amino-acid chain; its full sequence is NAD(P)H-quinone oxidoreductase subunit 5, chloroplastic (720 aa).

Helical transmembrane passes span 9-29 (WIVPFFPFIASILIGVNLLFF), 39-59 (IWAIFSILLLSIAMIFSFNIL), 87-107 (FLIDPLTSIMLVLITTVGVLV), 125-145 (FAYLSLFTASMLGLVLSPNLI), 147-167 (IYIFWELVGMCSYLLIGFWFT), 189-209 (LLLGILGFYWITGSFEFEILF), 221-239 (VNLYFANFCALLLFLGPIA), 258-278 (TPISALIHAATMVAAGIFLVA), 286-306 (LLPFVMTIISWVGAITAFLGA), 327-347 (LGYMMLALGIGSYQAGLFHLI), 354-374 (ALLFLGSGSVIHSVESIVGYS), 395-415 (GITFLLGTFSLCGIPPFACFW), 434-454 (ISLVTAGLTAFYMFRIYFLTF), 530-550 (LFPLLVLTLPTLFIGFLGAPF), 590-610 (LSVVFSGIFIAFILYGPFSLF), and 700-720 (LFGLIFGMIILLFIGFFGAMF).

The protein belongs to the complex I subunit 5 family. NDH is composed of at least 16 different subunits, 5 of which are encoded in the nucleus.

It localises to the plastid. Its subcellular location is the chloroplast thylakoid membrane. The enzyme catalyses a plastoquinone + NADH + (n+1) H(+)(in) = a plastoquinol + NAD(+) + n H(+)(out). It catalyses the reaction a plastoquinone + NADPH + (n+1) H(+)(in) = a plastoquinol + NADP(+) + n H(+)(out). NDH shuttles electrons from NAD(P)H:plastoquinone, via FMN and iron-sulfur (Fe-S) centers, to quinones in the photosynthetic chain and possibly in a chloroplast respiratory chain. The immediate electron acceptor for the enzyme in this species is believed to be plastoquinone. Couples the redox reaction to proton translocation, and thus conserves the redox energy in a proton gradient. This chain is NAD(P)H-quinone oxidoreductase subunit 5, chloroplastic (ndhF), found in Physcomitrium patens (Spreading-leaved earth moss).